The primary structure comprises 255 residues: Taurine import ATP-binding protein TauB (255 aa).

Positions 2-229 (LQISHLYADY…RFVAGESSRS (228 aa)) constitute an ABC transporter domain. Position 34–41 (34–41 (GPSGCGKT)) interacts with ATP.

This sequence belongs to the ABC transporter superfamily. Taurine importer (TC 3.A.1.17.1) family. As to quaternary structure, the complex is composed of two ATP-binding proteins (TauB), two transmembrane proteins (TauC) and a solute-binding protein (TauA).

The protein resides in the cell inner membrane. The enzyme catalyses taurine(out) + ATP + H2O = taurine(in) + ADP + phosphate + H(+). In terms of biological role, part of the ABC transporter complex TauABC involved in taurine import. Responsible for energy coupling to the transport system. The chain is Taurine import ATP-binding protein TauB from Shigella flexneri serotype 5b (strain 8401).